We begin with the raw amino-acid sequence, 195 residues long: Glutathione S-transferase class-mu 26 kDa isozyme (195 aa).

Residues 1–83 (MAPKLGYWKI…YIADKHNMLG (83 aa)) form the GST N-terminal domain. Residues 7–8 (YW), 41–45 (WRNEK), 54–55 (NL), and 67–68 (QS) contribute to the glutathione site. Residues 85–195 (CPKERAEISM…TFGGGDAPPK (111 aa)) enclose the GST C-terminal domain. Tyrosine 111 contributes to the substrate binding site.

Belongs to the GST superfamily. Mu family. In terms of assembly, homodimer.

The enzyme catalyses RX + glutathione = an S-substituted glutathione + a halide anion + H(+). Its function is as follows. Conjugation of reduced glutathione to a wide number of exogenous and endogenous hydrophobic electrophiles. GST isoenzymes appear to play a central role in the parasite detoxification system. Other functions are also suspected including a role in increasing the solubility of haematin in the parasite gut. The chain is Glutathione S-transferase class-mu 26 kDa isozyme from Schistosoma mansoni (Blood fluke).